We begin with the raw amino-acid sequence, 164 residues long: UPF0262 protein Xaut_1232 (164 aa).

Belongs to the UPF0262 family.

The protein is UPF0262 protein Xaut_1232 of Xanthobacter autotrophicus (strain ATCC BAA-1158 / Py2).